A 299-amino-acid polypeptide reads, in one-letter code: uncharacterized protein (299 aa).

Residues 1–20 form a disordered region; sequence MTTKHELVINTNEPSAPNAD. The chain crosses the membrane as a helical span at residues 172 to 192; it reads SFFIPPMVVISTPICLGLTVF.

Belongs to the IIV-6 259R family.

The protein localises to the membrane. This is an uncharacterized protein from Acheta domesticus (House cricket).